The chain runs to 274 residues: Insulin-like growth factor-binding protein-like 1 (274 aa).

Residues 1–21 (MPRSPGLFLLLLVLQPLPALG) form the signal peptide. The IGFBP N-terminal domain occupies 30–105 (RNPECGPCRP…PEGTGLCVCA (76 aa)). Cystine bridges form between cysteine 34–cysteine 59, cysteine 37–cysteine 61, cysteine 42–cysteine 62, cysteine 48–cysteine 65, cysteine 73–cysteine 87, cysteine 81–cysteine 102, and cysteine 111–cysteine 147. Residues 91 to 149 (AAGAAPEGTGLCVCAQRGSVCGSDGRSYPSVCALRLRARQAPRALPGHLHKARDGPCEF) form the Kazal-like domain. Residues 151–255 (PVVITPPQSV…GEAQSHGTVT (105 aa)) form the Ig-like C2-type domain. An N-linked (GlcNAc...) asparagine glycan is attached at asparagine 162. The cysteines at positions 172 and 239 are disulfide-linked.

It localises to the secreted. Its function is as follows. IGF-binding proteins prolong the half-life of IGFs and have been shown to either inhibit or stimulate the growth promoting effects of the IGFs in cell culture. They alter the interaction of IGFs with their cell surface receptors. The polypeptide is Insulin-like growth factor-binding protein-like 1 (IGFBPL1) (Bos taurus (Bovine)).